Here is a 527-residue protein sequence, read N- to C-terminus: Triostin synthetase I (527 aa).

Residue 187–188 (GG) participates in ATP binding. Residue 230 to 231 (HQ) participates in substrate binding. Residues 300–302 (SAP), Asp-406, Arg-421, and Lys-512 each bind ATP. Lys-512 is a binding site for substrate.

This sequence belongs to the ATP-dependent AMP-binding enzyme family. In terms of assembly, monomer.

Involved in triostin biosynthesis. Activates quinoxaline-2-carboxylic acid (QA) via catalysis of the ATP-pyrophosphate exchange reaction dependent on QA, and the formation of the corresponding adenylate. Also activates structural analogs of QA such as quinoline-2-carboxylic acid and thieno[3,2-b]pyridine-5-carboxylic acid, but not quinoline-3-carboxylic acid, quinoline-4-carboxylic acid, pyridine-2-carboxylic acid or 2-pyrazinecarboxylic acid. The protein is Triostin synthetase I (trsA) of Streptomyces triostinicus.